The sequence spans 101 residues: Apolipoprotein C-II (101 aa).

The signal sequence occupies residues M1–G22. The interval T23–T38 is O-glycosylated at one site. Residues A66 to L74 are lipid binding. Residues S78 to E101 form a lipoprotein lipase cofactor region.

This sequence belongs to the apolipoprotein C2 family. Proapolipoprotein C-II is synthesized as a sialic acid containing glycoprotein which is subsequently desialylated prior to its proteolytic processing. Post-translationally, proapolipoprotein C-II, the major form found in plasma undergoes proteolytic cleavage of its N-terminal hexapeptide to generate apolipoprotein C-II, which occurs as the minor form in plasma. Liver and intestine.

It localises to the secreted. Component of chylomicrons, very low-density lipoproteins (VLDL), low-density lipoproteins (LDL), and high-density lipoproteins (HDL) in plasma. Plays an important role in lipoprotein metabolism as an activator of lipoprotein lipase. Both proapolipoprotein C-II and apolipoprotein C-II can activate lipoprotein lipase. In normolipidemic individuals, it is mainly distributed in the HDL, whereas in hypertriglyceridemic individuals, predominantly found in the VLDL and LDL. In Homo sapiens (Human), this protein is Apolipoprotein C-II (APOC2).